Reading from the N-terminus, the 554-residue chain is Calcium-dependent protein kinase 3 (554 aa).

The tract at residues 30 to 55 (KKKSSNKSIKSQHKFEGSKIANKNNE) is disordered. In terms of domain architecture, Protein kinase spans 110–365 (NLSEEPLGKG…ASEALKHPWF (256 aa)). ATP-binding positions include 116–124 (LGKGTYGCV) and lysine 139. Aspartate 230 acts as the Proton acceptor in catalysis. The J domain autoinhibitory motif signature appears at 385-393 (NFKNYALLL). The tract at residues 385–420 (NFKNYALLLKLQKLAMTIIAQQSNDYDLQQLKTVFL) is j domain. The short motif at 394–403 (KLQKLAMTII) is the J domain EF-hand interaction motif element. EF-hand domains are found at residues 410 to 445 (YDLQ…SGLK), 448 to 479 (QNFD…DRKH), 480 to 515 (LSKK…GNKK), and 521 to 554 (KDVN…KLKY). Aspartate 458, aspartate 460, serine 462, arginine 464, glutamate 469, aspartate 493, aspartate 495, aspartate 497, glutamate 499, glutamate 504, aspartate 534, asparagine 536, aspartate 538, lysine 540, and glutamate 545 together coordinate Ca(2+).

It belongs to the protein kinase superfamily. Ser/Thr protein kinase family. CDPK subfamily. The cofactor is Mg(2+).

The protein resides in the cytoplasm. The catalysed reaction is L-seryl-[protein] + ATP = O-phospho-L-seryl-[protein] + ADP + H(+). The enzyme catalyses L-threonyl-[protein] + ATP = O-phospho-L-threonyl-[protein] + ADP + H(+). Activated by calcium. Upon calcium binding to the EF-hand domain 2, the C-terminus of the junction domain (J domain) undergoes a conformational change which results in the dissociation of the pseudo-substrate inhibitory motif from the catalytic domain. This, in turn, may facilitate the autophosphorylation of the activation loop at Thr-271, which leads to the kinase activation. In terms of biological role, calcium-dependent protein kinase which acts as a sensor and effector of intracellular Ca(2+) levels probably in part downstream of cGMP-activated PKG kinase. In the mosquito midgut, regulates the gliding motility of the ookinete which is essential for the ookinete to invade the midgut epithelium. However, another study showed that while required for ookinete invasion of the midgut epithelium, is not required for ookinete gliding motility. This chain is Calcium-dependent protein kinase 3, found in Plasmodium berghei (strain Anka).